A 1261-amino-acid chain; its full sequence is AT-rich interactive domain-containing protein 4A (1261 aa).

Residues 4-121 (ADEPAYLTVG…RHFAESETLD (118 aa)) form a DNA-binding region. 3 disordered regions span residues 142 to 169 (RGRRSSLPITEDEKEEESSEEEDEDKRR), 273 to 310 (ESSSSDDEECPAEEHEEEKEKEAKKEEEELPEEELDPE), and 435 to 470 (APEMPLLDVKSEPEENTDSNSESDREDTELKSPRGR). Acidic residues-rich tracts occupy residues 151-165 (TEDEKEEESSEEEDE) and 276-289 (SSDDEECPAEEHEE). The span at 290–299 (EKEKEAKKEE) shows a compositional bias: basic and acidic residues. Over residues 300 to 310 (EELPEEELDPE) the composition is skewed to acidic residues. Residues 309–401 (PEERDNFLQQ…YLYGFEEYCR (93 aa)) enclose the ARID domain. K481 is covalently cross-linked (Glycyl lysine isopeptide (Lys-Gly) (interchain with G-Cter in SUMO2)). Disordered stretches follow at residues 498–582 (LENK…GTKV), 633–768 (WPLD…EAGD), and 842–953 (FSST…EDAM). A compositionally biased stretch (basic and acidic residues) spans 512-522 (PAAKREHELLF). A compositionally biased stretch (basic residues) spans 526–536 (STPKNKEKKIK). The span at 541–551 (SERDSDEEEEK) shows a compositional bias: acidic residues. The segment covering 552-564 (SQEREETESRCDS) has biased composition (basic and acidic residues). The segment covering 565–574 (EGEDEEDDTE) has biased composition (acidic residues). Positions 579–631 (GTKVKVKYGRGKTQKIYEASIKSTEMDDGEILYLVHYYGWNVRYDEWVKADRI) constitute a Tudor-knot domain. The segment covering 640 to 649 (PKKKQKKKVK) has biased composition (basic residues). Residues 650 to 665 (NKEDSEKDEKRDEERQ) show a composition bias toward basic and acidic residues. Over residues 676–689 (STFSPNMPYSLSKT) the composition is skewed to polar residues. At S679 the chain carries Phosphoserine. Low complexity predominate over residues 690–702 (SNSEGKSDSCSSD). The segment covering 708-753 (QLEKSSGGEDLSPDVKEELEKNENAHDDKLDEENPKIVHISKENDR) has biased composition (basic and acidic residues). S719 bears the Phosphoserine mark. Glycyl lysine isopeptide (Lys-Gly) (interchain with G-Cter in SUMO2) cross-links involve residues K723 and K743. S867 bears the Phosphoserine mark. 2 stretches are compositionally biased toward basic and acidic residues: residues 899–909 (KGAHVEQHFET) and 929–947 (TSEKSDSPAEEEPVHTPLK). The tract at residues 955–968 (LIGPETLVCHEVDL) is retinoblastoma protein binding. Positions 1067–1080 (HERESREKGQKRPS) are enriched in basic and acidic residues. Disordered stretches follow at residues 1067–1173 (HERE…RTYK) and 1216–1261 (RRRK…VECR). Phosphoserine occurs at positions 1113 and 1149. Over residues 1230–1252 (HAGASMSSASSDTGMSPSSSSPP) the composition is skewed to low complexity.

In terms of assembly, identified in mSin3A corepressor complexes together with SIN3A, SIN3B, RBBP4, RBBP7, SAP30, BRMS1, HDAC1 and HDAC2. Interacts with BRMS1. Interacts with RB1. Interacts with ARID4B. Interacts with AR. In terms of tissue distribution, expressed in Sertoli cells of the testis.

Its subcellular location is the nucleus. DNA-binding protein which modulates activity of several transcription factors including RB1 (retinoblastoma-associated protein) and AR (androgen receptor). May function as part of an mSin3A repressor complex. Has no intrinsic transcriptional activity. Plays a role in the regulation of epigenetic modifications at the PWS/AS imprinting center near the SNRPN promoter, where it might function as part of a complex with RB1 and ARID4B. Involved in spermatogenesis, together with ARID4B, where it acts as a transcriptional coactivator for AR and enhances expression of genes required for sperm maturation. Regulates expression of the tight junction protein CLDN3 in the testis, which is important for integrity of the blood-testis barrier. Plays a role in myeloid homeostasis where it regulates the histone methylation state of bone marrow cells and expression of various genes involved in hematopoiesis. May function as a leukemia suppressor. This Mus musculus (Mouse) protein is AT-rich interactive domain-containing protein 4A.